We begin with the raw amino-acid sequence, 81 residues long: Trefoil factor 1 (81 aa).

Positions 1 to 21 (MEHKVTCVLAMVLMLALSSLA) are cleaved as a signal peptide. Pyrrolidone carboxylic acid is present on Gln-22. A P-type domain is found at 26–69 (ETCAVIPRERINCGFPGVTAQQCKEKGCCFDDSVRGFPWCFRPL). 3 disulfide bridges follow: Cys-28–Cys-54, Cys-38–Cys-53, and Cys-48–Cys-65.

The protein resides in the secreted. Its function is as follows. Stabilizer of the mucous gel overlying the gastrointestinal mucosa that provides a physical barrier against various noxious agents. This chain is Trefoil factor 1 (Tff1), found in Rattus norvegicus (Rat).